Here is a 318-residue protein sequence, read N- to C-terminus: MDIAFIIDPIASLDPGHDTSVALMEAAQAAGARVWVTEISQLLIREGQVWAALTPIQLSPVQLVDGQWQIPQPWFELGALEWRPLNTFRAVWMRKDPPVNTAYLYATYCLDLVDPQTTLVLNSPAGLRHANEKMYALQFTSVIPKTIVTADKQRIREFVQQQGMAVLKPLGGKGGEGILFLQAGDRNLNSMIEISTQRGQLPVMLQEYLPAAKEGDKRIILLNGEPIGAVNRIPTGDEFRGNMATGGRVAAAEITERDRQICQTLAPALRRDGLYFVGIDVIGGYLTEVNVTSPTGVREIDRLNGTRLGQQVMAWLFS.

One can recognise an ATP-grasp domain in the interval 133–317 (KMYALQFTSV…LGQQVMAWLF (185 aa)). ATP is bound at residue 159–215 (VQQQGMAVLKPLGGKGGEGILFLQAGDRNLNSMIEISTQRGQLPVMLQEYLPAAKEG). Residues glutamate 288 and asparagine 290 each contribute to the Mg(2+) site.

This sequence belongs to the prokaryotic GSH synthase family. Requires Mg(2+) as cofactor. It depends on Mn(2+) as a cofactor.

The catalysed reaction is gamma-L-glutamyl-L-cysteine + glycine + ATP = glutathione + ADP + phosphate + H(+). It participates in sulfur metabolism; glutathione biosynthesis; glutathione from L-cysteine and L-glutamate: step 2/2. The chain is Glutathione synthetase from Thermosynechococcus vestitus (strain NIES-2133 / IAM M-273 / BP-1).